The primary structure comprises 151 residues: MRKAIFPGTFDPFTIGHYSVVERALTFMDEIIIGIGINENKNTYFPIEKREEMIRNLYKDNPRIKVMSYDCLTIDFAQQVEAQFIVRGIRTVKDFEYEETIADINRKLAGIETILLFTEPELTCVSSTIVRELLTYNKDISQFIPEGMEIN.

Residue T9 participates in substrate binding. Residues 9–10 (TF) and H17 each bind ATP. K41, T73, and R87 together coordinate substrate. Residues 88 to 90 (GIR), E98, and 122 to 128 (LTCVSST) each bind ATP.

The protein belongs to the bacterial CoaD family. Homohexamer. Mg(2+) is required as a cofactor.

The protein resides in the cytoplasm. The catalysed reaction is (R)-4'-phosphopantetheine + ATP + H(+) = 3'-dephospho-CoA + diphosphate. The protein operates within cofactor biosynthesis; coenzyme A biosynthesis; CoA from (R)-pantothenate: step 4/5. Reversibly transfers an adenylyl group from ATP to 4'-phosphopantetheine, yielding dephospho-CoA (dPCoA) and pyrophosphate. In Bacteroides thetaiotaomicron (strain ATCC 29148 / DSM 2079 / JCM 5827 / CCUG 10774 / NCTC 10582 / VPI-5482 / E50), this protein is Phosphopantetheine adenylyltransferase.